The chain runs to 468 residues: Adenylosuccinate synthetase (468 aa).

Residues G23 to K29 and G51 to E53 each bind GTP. The active-site Proton acceptor is the D24. Mg(2+)-binding residues include D24 and G51. IMP contacts are provided by residues D24–K27, N49–H52, T142, R156, N238, T253, and R317. Catalysis depends on H52, which acts as the Proton donor. V313–R319 contacts substrate. GTP is bound by residues R319 and K345–D347.

Belongs to the adenylosuccinate synthetase family. In terms of assembly, homodimer. It depends on Mg(2+) as a cofactor.

Its subcellular location is the cytoplasm. The enzyme catalyses IMP + L-aspartate + GTP = N(6)-(1,2-dicarboxyethyl)-AMP + GDP + phosphate + 2 H(+). Its pathway is purine metabolism; AMP biosynthesis via de novo pathway; AMP from IMP: step 1/2. Its function is as follows. Plays an important role in the salvage pathway for purine nucleotide biosynthesis. Catalyzes the first committed step in the biosynthesis of AMP from IMP. This chain is Adenylosuccinate synthetase, found in Theileria annulata.